The following is a 442-amino-acid chain: Vacuolar zinc transporter ZRC1 (442 aa).

Topologically, residues 1-8 (MITGKELR) are cytoplasmic. The chain crosses the membrane as a helical span at residues 9–29 (IISLLTLDTVFFLLEITIGYM). The Vacuolar portion of the chain corresponds to 30-32 (SHS). A helical membrane pass occupies residues 33 to 53 (LALIADSFHMLNDIISLLVAL). Residues 54 to 75 (WAVDVAKNRGPDAKYTYGWKRA) are Cytoplasmic-facing. Residues 76–96 (EILGALINAVFLIALCFSIMI) form a helical membrane-spanning segment. Topologically, residues 97 to 112 (EALQRLIEPQEIQNPR) are vacuolar. A helical transmembrane segment spans residues 113–133 (LVLYVGVAGLISNVVGLFLFH). Residues 134–235 (DHGSDSLHSH…GHRSLNMHGV (102 aa)) lie on the Cytoplasmic side of the membrane. Short sequence motifs (histidine repeat) lie at residues 141–145 (HSHSH), 163–167 (HSHSH), and 216–220 (HDHSH). Disordered regions lie at residues 141 to 170 (HSHS…HASL) and 208 to 227 (QPLL…KPGH). Over residues 149–170 (ESGNNDLDIESNATHSHSHASL) the composition is skewed to polar residues. A compositionally biased stretch (basic and acidic residues) spans 212 to 224 (NHDDHDHSHESKK). Residues 236-256 (FLHVLGDALGNIGVIAAALFI) traverse the membrane as a helical segment. Residues 257–265 (WKTEYSWRY) lie on the Vacuolar side of the membrane. A helical membrane pass occupies residues 266 to 286 (YSDPIVSLIITIIIFSSALPL). Residues 287 to 442 (SRRASRILLQ…AVNCNTSNCL (156 aa)) are Cytoplasmic-facing. A Glycyl lysine isopeptide (Lys-Gly) (interchain with G-Cter in ubiquitin) cross-link involves residue lysine 357. 3 positions are modified to phosphoserine: serine 387, serine 393, and serine 397. The interval 391–419 (GGSPSSSQEAFDSHGNTEHGRKKRSPTAY) is disordered.

The protein belongs to the cation diffusion facilitator (CDF) transporter (TC 2.A.4) family. SLC30A subfamily.

The protein resides in the vacuole membrane. The enzyme catalyses Zn(2+)(in) = Zn(2+)(out). Vacuolar transporter that regulates zinc homeostasis by mediating zinc transport and storage into the vacuole. ZRC1 senses zinc availability in the cytosol, which might be performed through the histidine repeat motifs, and transports zinc from the cytosol to the vacuole if zinc in cytosol is abundant, conferring resistance to zinc toxicity. Plays a role in resistance to zinc shock resulting from sudden influx of zinc into cytoplasm when ZRT1 and ZRT2 are induced in response to zinc depletion. The polypeptide is Vacuolar zinc transporter ZRC1 (Saccharomyces cerevisiae (strain ATCC 204508 / S288c) (Baker's yeast)).